A 593-amino-acid polypeptide reads, in one-letter code: Mitoguardin 2 (593 aa).

Helical transmembrane passes span 11-31 and 42-62; these read MIQA…TTFG and PGLR…ALAA. Disordered stretches follow at residues 101–134 and 195–228; these read KKGY…HSGS and LSVG…EPES. Residues 107–123 are compositionally biased toward polar residues; the sequence is RRVQSPSSKSNDTLSGI. The segment covering 124 to 134 has biased composition (low complexity); sequence SSIEPSKHSGS. Ser-132 carries the phosphoserine modification. A Phosphothreonine modification is found at Thr-206. Phosphoserine is present on residues Ser-220, Ser-224, and Ser-228. Thr-273 is subject to Phosphothreonine. Phosphoserine is present on residues Ser-276 and Ser-295. The short motif at 292–298 is the FFAT element; sequence SFFSATE. The helical transmembrane segment at 563-583 threads the bilayer; sequence ILLGYLGVPAASSIGLNGVLP.

The protein belongs to the mitoguardin family. In terms of assembly, homodimer and heterodimer; forms heterodimers with MIGA1. Interacts with PLD6/MitoPLD. Interacts (via phosphorylated FFAT motif) with MOSPD2. Post-translationally, phosphorylation at Ser-295 of the FFAT motif activates interaction with MOSPD2.

The protein resides in the mitochondrion outer membrane. In terms of biological role, regulator of mitochondrial fusion: acts by forming homo- and heterodimers at the mitochondrial outer membrane and facilitating the formation of PLD6/MitoPLD dimers. May act by regulating phospholipid metabolism via PLD6/MitoPLD. This Bos taurus (Bovine) protein is Mitoguardin 2.